The chain runs to 286 residues: MPKISGQTQLLGVIGDPIEHTLSPAMHNAALEYLGLNYVYVPFWVKPQQLGVAIAGLEALNVVGFNVTIPHKETILPYLADVSDLAQQVGAVNTVYRSEKGWVGTNTDVHGFLAPLRQQSCLWSEIAVLVLGYGGAARAVVTACYDLGCRQIYISGRQRERLGAFVASWPQITLHPLLWSERATCLAKISLVVNTTPIGMSPHTGATPLTAEDLAKLPATAIVYDLIYKPRPTLLLQLAMARGLQTFDGLAMLLHQGAAALEYWLGQPAPTAIMATALETALGTEK.

Shikimate is bound by residues 21–23 (TLS) and Thr-68. The active-site Proton acceptor is the Lys-72. Residue Asp-84 participates in NADP(+) binding. Residues Asn-93 and Asp-108 each contribute to the shikimate site. Residues 132-136 (GYGGA) and Leu-226 contribute to the NADP(+) site. Tyr-228 contacts shikimate. Position 249 (Gly-249) interacts with NADP(+).

Belongs to the shikimate dehydrogenase family. Homodimer.

It carries out the reaction shikimate + NADP(+) = 3-dehydroshikimate + NADPH + H(+). Its pathway is metabolic intermediate biosynthesis; chorismate biosynthesis; chorismate from D-erythrose 4-phosphate and phosphoenolpyruvate: step 4/7. Its function is as follows. Involved in the biosynthesis of the chorismate, which leads to the biosynthesis of aromatic amino acids. Catalyzes the reversible NADPH linked reduction of 3-dehydroshikimate (DHSA) to yield shikimate (SA). The polypeptide is Shikimate dehydrogenase (NADP(+)) (Thermosynechococcus vestitus (strain NIES-2133 / IAM M-273 / BP-1)).